The primary structure comprises 316 residues: tRNA pseudouridine synthase B (316 aa).

Asp38 acts as the Nucleophile in catalysis. The PUA domain occupies 238 to 312 (YPEVIVKSSA…PVCVLARQAG (75 aa)).

This sequence belongs to the pseudouridine synthase TruB family. Type 1 subfamily.

It carries out the reaction uridine(55) in tRNA = pseudouridine(55) in tRNA. Functionally, responsible for synthesis of pseudouridine from uracil-55 in the psi GC loop of transfer RNAs. This chain is tRNA pseudouridine synthase B, found in Pelotomaculum thermopropionicum (strain DSM 13744 / JCM 10971 / SI).